A 229-amino-acid chain; its full sequence is ATP-dependent Clp protease proteolytic subunit 1 (229 aa).

Residue serine 129 is the Nucleophile of the active site. Histidine 154 is an active-site residue.

This sequence belongs to the peptidase S14 family. Fourteen ClpP subunits assemble into 2 heptameric rings which stack back to back to give a disk-like structure with a central cavity, resembling the structure of eukaryotic proteasomes.

Its subcellular location is the cytoplasm. The enzyme catalyses Hydrolysis of proteins to small peptides in the presence of ATP and magnesium. alpha-casein is the usual test substrate. In the absence of ATP, only oligopeptides shorter than five residues are hydrolyzed (such as succinyl-Leu-Tyr-|-NHMec, and Leu-Tyr-Leu-|-Tyr-Trp, in which cleavage of the -Tyr-|-Leu- and -Tyr-|-Trp bonds also occurs).. Its function is as follows. Cleaves peptides in various proteins in a process that requires ATP hydrolysis. Has a chymotrypsin-like activity. Plays a major role in the degradation of misfolded proteins. The chain is ATP-dependent Clp protease proteolytic subunit 1 from Thermosynechococcus vestitus (strain NIES-2133 / IAM M-273 / BP-1).